Reading from the N-terminus, the 174-residue chain is Calcineurin subunit B (174 aa).

4 EF-hand domains span residues 21-56, 60-88, 90-125, and 131-166; these read EEIERIRKRFIKIDANQSGSIDRNEFLSIPSVASNP, RLFSVVDEDGGGDVDFQEFINSLSVFSVH, NKEEKLKFAFKIYDIDRDGYISNGELYLVLKMMVGT, and QLQQIVDKTIMEVDKDRDGKISFEEFKDIVSGSNVT. Ca(2+) is bound by residues aspartate 34, asparagine 36, serine 38, serine 40, glutamate 45, aspartate 66, aspartate 68, aspartate 72, glutamate 77, aspartate 103, aspartate 105, aspartate 107, tyrosine 109, glutamate 114, aspartate 144, aspartate 146, aspartate 148, lysine 150, and glutamate 155.

Belongs to the calcineurin regulatory subunit family. In terms of assembly, composed of a catalytic subunit (A) and a regulatory subunit (B).

Regulatory subunit of calcineurin, a calcium-dependent, calmodulin stimulated protein phosphatase. Confers calcium sensitivity. The polypeptide is Calcineurin subunit B (cnb1) (Schizosaccharomyces pombe (strain 972 / ATCC 24843) (Fission yeast)).